A 190-amino-acid chain; its full sequence is Threonylcarbamoyl-AMP synthase (190 aa).

The YrdC-like domain occupies 7–190; it reads GDAIAAAIDV…ALTGELFRQG (184 aa).

It belongs to the SUA5 family. TsaC subfamily.

Its subcellular location is the cytoplasm. The enzyme catalyses L-threonine + hydrogencarbonate + ATP = L-threonylcarbamoyladenylate + diphosphate + H2O. Functionally, required for the formation of a threonylcarbamoyl group on adenosine at position 37 (t(6)A37) in tRNAs that read codons beginning with adenine. Catalyzes the conversion of L-threonine, HCO(3)(-)/CO(2) and ATP to give threonylcarbamoyl-AMP (TC-AMP) as the acyladenylate intermediate, with the release of diphosphate. The polypeptide is Threonylcarbamoyl-AMP synthase (Shigella flexneri).